We begin with the raw amino-acid sequence, 340 residues long: Glycerol-3-phosphate dehydrogenase [NAD(P)+] (340 aa).

NADPH-binding residues include Ser-23, Trp-24, Arg-43, Lys-44, and Lys-113. Sn-glycerol 3-phosphate-binding residues include Lys-113, Gly-141, and Thr-143. An NADPH-binding site is contributed by Ala-145. Residues Lys-196, Asp-249, Ser-259, Arg-260, and Asn-261 each contribute to the sn-glycerol 3-phosphate site. Lys-196 acts as the Proton acceptor in catalysis. Arg-260 provides a ligand contact to NADPH. Glu-286 is an NADPH binding site.

It belongs to the NAD-dependent glycerol-3-phosphate dehydrogenase family.

It localises to the cytoplasm. It catalyses the reaction sn-glycerol 3-phosphate + NAD(+) = dihydroxyacetone phosphate + NADH + H(+). It carries out the reaction sn-glycerol 3-phosphate + NADP(+) = dihydroxyacetone phosphate + NADPH + H(+). It participates in membrane lipid metabolism; glycerophospholipid metabolism. Its function is as follows. Catalyzes the reduction of the glycolytic intermediate dihydroxyacetone phosphate (DHAP) to sn-glycerol 3-phosphate (G3P), the key precursor for phospholipid synthesis. The protein is Glycerol-3-phosphate dehydrogenase [NAD(P)+] of Zymomonas mobilis subsp. mobilis (strain ATCC 31821 / ZM4 / CP4).